The primary structure comprises 905 residues: DNA gyrase subunit A (905 aa).

Positions 35–524 constitute a Topo IIA-type catalytic domain; it reads IPDVRDGLKP…GEFDQDIEDL (490 aa). The O-(5'-phospho-DNA)-tyrosine intermediate role is filled by Y123. The GyrA-box motif lies at 551-557; sequence QKRGGKG. The disordered stretch occupies residues 885-905; it reads TAESEEDSELEEEGLEQSEEV. Over residues 886–905 the composition is skewed to acidic residues; it reads AESEEDSELEEEGLEQSEEV.

This sequence belongs to the type II topoisomerase GyrA/ParC subunit family. In terms of assembly, heterotetramer, composed of two GyrA and two GyrB chains. In the heterotetramer, GyrA contains the active site tyrosine that forms a transient covalent intermediate with DNA, while GyrB binds cofactors and catalyzes ATP hydrolysis.

The protein resides in the cytoplasm. The catalysed reaction is ATP-dependent breakage, passage and rejoining of double-stranded DNA.. In terms of biological role, a type II topoisomerase that negatively supercoils closed circular double-stranded (ds) DNA in an ATP-dependent manner to modulate DNA topology and maintain chromosomes in an underwound state. Negative supercoiling favors strand separation, and DNA replication, transcription, recombination and repair, all of which involve strand separation. Also able to catalyze the interconversion of other topological isomers of dsDNA rings, including catenanes and knotted rings. Type II topoisomerases break and join 2 DNA strands simultaneously in an ATP-dependent manner. This Rickettsia conorii (strain ATCC VR-613 / Malish 7) protein is DNA gyrase subunit A.